Reading from the N-terminus, the 779-residue chain is Ribonucleoside-diphosphate reductase large subunit (779 aa).

Substrate-binding positions include Ser-178, 193–194 (SC), Gly-222, 420–424 (NLCIE), and 614–618 (PTATS). A disulfide bond links Cys-194 and Cys-440. Asn-420 (proton acceptor) is an active-site residue. The active-site Cysteine radical intermediate is the Cys-422. Glu-424 (proton acceptor) is an active-site residue.

This sequence belongs to the ribonucleoside diphosphate reductase large chain family. As to quaternary structure, heterotetramer composed of a homodimer of the large subunit (R1) and a homodimer of the small subunit (R2). Larger multisubunit protein complex are also active, composed of (R1)n(R2)n.

It catalyses the reaction a 2'-deoxyribonucleoside 5'-diphosphate + [thioredoxin]-disulfide + H2O = a ribonucleoside 5'-diphosphate + [thioredoxin]-dithiol. Its activity is regulated as follows. Under complex allosteric control mediated by deoxynucleoside triphosphates and ATP binding. The type of nucleotide bound at the specificity site determines substrate preference. It seems probable that ATP makes the enzyme reduce CDP and UDP, dGTP favors ADP reduction and dTTP favors GDP reduction. Ribonucleoside-diphosphate reductase holoenzyme provides the precursors necessary for viral DNA synthesis. Allows virus growth in non-dividing cells. Catalyzes the biosynthesis of deoxyribonucleotides from the corresponding ribonucleotides. This is Ribonucleoside-diphosphate reductase large subunit from African swine fever virus (isolate Tick/Malawi/Lil 20-1/1983) (ASFV).